Consider the following 288-residue polypeptide: Polyamine aminopropyltransferase (288 aa).

The region spanning Glu9 to Asp238 is the PABS domain. Gln33 provides a ligand contact to S-methyl-5'-thioadenosine. Spermidine is bound by residues His64 and Asp88. S-methyl-5'-thioadenosine is bound by residues Glu108 and Asp140–Gly141. Residue Asp158 is the Proton acceptor of the active site. Residue Asp158 to Asp161 coordinates spermidine. Pro165 serves as a coordination point for S-methyl-5'-thioadenosine.

It belongs to the spermidine/spermine synthase family. In terms of assembly, homodimer or homotetramer.

It is found in the cytoplasm. The catalysed reaction is S-adenosyl 3-(methylsulfanyl)propylamine + putrescine = S-methyl-5'-thioadenosine + spermidine + H(+). It participates in amine and polyamine biosynthesis; spermidine biosynthesis; spermidine from putrescine: step 1/1. In terms of biological role, catalyzes the irreversible transfer of a propylamine group from the amino donor S-adenosylmethioninamine (decarboxy-AdoMet) to putrescine (1,4-diaminobutane) to yield spermidine. The polypeptide is Polyamine aminopropyltransferase (Escherichia coli O81 (strain ED1a)).